Consider the following 312-residue polypeptide: uncharacterized protein (312 aa).

The Extracellular segment spans residues 1–14 (MSIVETCISFVSTN). The chain crosses the membrane as a helical span at residues 15 to 35 (PFYPFCTGLLLNCVVTPLYFW). At 36 to 41 (KTQNGR) the chain is on the cytoplasmic side. A helical transmembrane segment spans residues 42–62 (IVVVSLLQFVVLYATAFISIG). At 63 to 179 (TDKSLYRNKW…LEYDQDTATE (117 aa)) the chain is on the extracellular side. Residues 70–173 (NKWVALPLSK…KGPLGELEYD (104 aa)) form the FAD-binding FR-type domain. The helical transmembrane segment at 180–200 (LGIIAGGSGITPVLQVLQEII) threads the bilayer. Residues 201 to 312 (PSPEDLTHIS…GNGTDKVFVF (112 aa)) are Cytoplasmic-facing.

Belongs to the flavoprotein pyridine nucleotide cytochrome reductase family. FAD serves as cofactor.

Its subcellular location is the membrane. This is an uncharacterized protein from Saccharomyces cerevisiae (strain ATCC 204508 / S288c) (Baker's yeast).